Consider the following 1127-residue polypeptide: Ras guanine nucleotide exchange factor F (1127 aa).

Disordered regions lie at residues M1 to N82 and N96 to S154. 2 stretches are compositionally biased toward low complexity: residues N23–P53 and N67–N82. Polar residues predominate over residues R122–G132. Low complexity predominate over residues S133–S154. Kelch repeat units follow at residues G212 to N261, S262 to G311, M313 to G366, N367 to D418, and I420 to N469. Residues S557–H589 form the LisH domain. An N-terminal Ras-GEF domain is found at N673–Q804. The region spanning D835–L1062 is the Ras-GEF domain. Residues L1090 to L1127 are disordered. Positions S1103–L1127 are enriched in low complexity.

Its function is as follows. Promotes the exchange of Ras-bound GDP by GTP. The sequence is that of Ras guanine nucleotide exchange factor F (gefF) from Dictyostelium discoideum (Social amoeba).